Reading from the N-terminus, the 348-residue chain is GDSL esterase/lipase At4g30140 (348 aa).

Positions 1–28 (MVEGESKALWIILATVFAVAAVAPAVHG) are cleaved as a signal peptide. Serine 40 (nucleophile) is an active-site residue. Catalysis depends on residues aspartate 316 and histidine 319. Residue asparagine 342 is glycosylated (N-linked (GlcNAc...) asparagine).

This sequence belongs to the 'GDSL' lipolytic enzyme family.

It is found in the secreted. This is GDSL esterase/lipase At4g30140 from Arabidopsis thaliana (Mouse-ear cress).